Consider the following 171-residue polypeptide: Shikimate kinase (171 aa).

Residue 14–19 coordinates ATP; sequence GAGKST. S18 is a binding site for Mg(2+). The substrate site is built by D36, R60, and G82. R120 lines the ATP pocket. Residue R139 participates in substrate binding. Q156 is a binding site for ATP.

This sequence belongs to the shikimate kinase family. In terms of assembly, monomer. Mg(2+) is required as a cofactor.

Its subcellular location is the cytoplasm. It carries out the reaction shikimate + ATP = 3-phosphoshikimate + ADP + H(+). It participates in metabolic intermediate biosynthesis; chorismate biosynthesis; chorismate from D-erythrose 4-phosphate and phosphoenolpyruvate: step 5/7. In terms of biological role, catalyzes the specific phosphorylation of the 3-hydroxyl group of shikimic acid using ATP as a cosubstrate. In Shewanella pealeana (strain ATCC 700345 / ANG-SQ1), this protein is Shikimate kinase.